The primary structure comprises 158 residues: Endoribonuclease YbeY (158 aa).

The Zn(2+) site is built by histidine 118, histidine 122, and histidine 128.

The protein belongs to the endoribonuclease YbeY family. Zn(2+) serves as cofactor.

It localises to the cytoplasm. In terms of biological role, single strand-specific metallo-endoribonuclease involved in late-stage 70S ribosome quality control and in maturation of the 3' terminus of the 16S rRNA. This is Endoribonuclease YbeY from Bartonella bacilliformis (strain ATCC 35685 / KC583 / Herrer 020/F12,63).